Reading from the N-terminus, the 621-residue chain is Chaperone protein DnaK (621 aa).

T202 is modified (phosphothreonine; by autocatalysis). The segment at 596–621 (SQFAQAAKQNEEKKEEDKKDSEESKN) is disordered. The segment covering 604 to 621 (QNEEKKEEDKKDSEESKN) has biased composition (basic and acidic residues).

The protein belongs to the heat shock protein 70 family.

Its function is as follows. Acts as a chaperone. The sequence is that of Chaperone protein DnaK from Malacoplasma penetrans (strain HF-2) (Mycoplasma penetrans).